The sequence spans 488 residues: Prostaglandin E2 receptor EP4 subtype (488 aa).

The Extracellular segment spans residues methionine 1–serine 19. Asparagine 7 carries N-linked (GlcNAc...) asparagine glycosylation. Residues proline 20 to cysteine 43 traverse the membrane as a helical segment. The Cytoplasmic portion of the chain corresponds to lysine 44 to tyrosine 55. The helical transmembrane segment at threonine 56–threonine 79 threads the bilayer. Residues tyrosine 80–threonine 96 are Extracellular-facing. A disulfide bridge links cysteine 92 with cysteine 170. Residues phenylalanine 97–isoleucine 115 form a helical membrane-spanning segment. The Cytoplasmic portion of the chain corresponds to glutamate 116–leucine 135. Residues alanine 136–arginine 160 traverse the membrane as a helical segment. Residues serine 161–phenylalanine 184 are Extracellular-facing. The chain crosses the membrane as a helical span at residues serine 185–leucine 211. Topologically, residues arginine 212–glutamate 270 are cytoplasmic. The chain crosses the membrane as a helical span at residues isoleucine 271–asparagine 298. Residues glutamine 299–leucine 315 are Extracellular-facing. The chain crosses the membrane as a helical span at residues glutamine 316–leucine 335. Residues arginine 336–isoleucine 488 lie on the Cytoplasmic side of the membrane. The disordered stretch occupies residues glycine 358–serine 380. 4 positions are modified to phosphoserine: serine 377, serine 380, serine 382, and serine 385.

This sequence belongs to the G-protein coupled receptor 1 family. As to quaternary structure, interacts with FEM1A. In terms of processing, phosphorylation mediates agonist-mediated desensitization by promoting cytoplasmic retention.

It localises to the cell membrane. In terms of biological role, receptor for prostaglandin E2 (PGE2). The activity of this receptor is mediated by G(s) proteins that stimulate adenylate cyclase. Has a relaxing effect on smooth muscle. May play an important role in regulating renal hemodynamics, intestinal epithelial transport, adrenal aldosterone secretion, and uterine function. This Rattus norvegicus (Rat) protein is Prostaglandin E2 receptor EP4 subtype (Ptger4).